Reading from the N-terminus, the 367-residue chain is D-alanine--D-alanine ligase (367 aa).

Residues 150 to 357 form the ATP-grasp domain; sequence KKLLTAAGLP…YPTLLATMVE (208 aa). 178-233 is a binding site for ATP; the sequence is RERLGLPVFVKPSRGGSSIGVSRVTAWDALPAAIELARRHDPKVIVEAAIPGRELE. Residues aspartate 312, glutamate 324, and asparagine 326 each coordinate Mg(2+).

It belongs to the D-alanine--D-alanine ligase family. It depends on Mg(2+) as a cofactor. The cofactor is Mn(2+).

The protein resides in the cytoplasm. It catalyses the reaction 2 D-alanine + ATP = D-alanyl-D-alanine + ADP + phosphate + H(+). It participates in cell wall biogenesis; peptidoglycan biosynthesis. Cell wall formation. The polypeptide is D-alanine--D-alanine ligase (Mycolicibacterium vanbaalenii (strain DSM 7251 / JCM 13017 / BCRC 16820 / KCTC 9966 / NRRL B-24157 / PYR-1) (Mycobacterium vanbaalenii)).